The following is a 366-amino-acid chain: Carbamoyl phosphate synthase small chain (366 aa).

Residues 1-168 form a CPSase region; the sequence is MYGILVLEDG…KETVIYNAED (168 aa). L-glutamine-binding residues include Ser45, Gly220, and Gly222. In terms of domain architecture, Glutamine amidotransferase type-1 spans 172–363; the sequence is RCVLIDCGVK…VELGIKFKAE (192 aa). Cys247 (nucleophile) is an active-site residue. The L-glutamine site is built by Leu248, Gln251, Asn289, Gly291, and Phe292. Catalysis depends on residues His336 and Glu338.

The protein belongs to the CarA family. Composed of two chains; the small (or glutamine) chain promotes the hydrolysis of glutamine to ammonia, which is used by the large (or ammonia) chain to synthesize carbamoyl phosphate. Tetramer of heterodimers (alpha,beta)4.

It catalyses the reaction hydrogencarbonate + L-glutamine + 2 ATP + H2O = carbamoyl phosphate + L-glutamate + 2 ADP + phosphate + 2 H(+). The enzyme catalyses L-glutamine + H2O = L-glutamate + NH4(+). It functions in the pathway amino-acid biosynthesis; L-arginine biosynthesis; carbamoyl phosphate from bicarbonate: step 1/1. The protein operates within pyrimidine metabolism; UMP biosynthesis via de novo pathway; (S)-dihydroorotate from bicarbonate: step 1/3. Its function is as follows. Small subunit of the glutamine-dependent carbamoyl phosphate synthetase (CPSase). CPSase catalyzes the formation of carbamoyl phosphate from the ammonia moiety of glutamine, carbonate, and phosphate donated by ATP, constituting the first step of 2 biosynthetic pathways, one leading to arginine and/or urea and the other to pyrimidine nucleotides. The small subunit (glutamine amidotransferase) binds and cleaves glutamine to supply the large subunit with the substrate ammonia. The chain is Carbamoyl phosphate synthase small chain from Methanococcus maripaludis (strain C5 / ATCC BAA-1333).